Reading from the N-terminus, the 368-residue chain is Chorismate synthase (368 aa).

An NADP(+)-binding site is contributed by R46. FMN contacts are provided by residues 124–126 (RAS), G284, 299–303 (KPTPS), and R326.

This sequence belongs to the chorismate synthase family. FMNH2 is required as a cofactor.

The enzyme catalyses 5-O-(1-carboxyvinyl)-3-phosphoshikimate = chorismate + phosphate. The protein operates within metabolic intermediate biosynthesis; chorismate biosynthesis; chorismate from D-erythrose 4-phosphate and phosphoenolpyruvate: step 7/7. Its function is as follows. Catalyzes the anti-1,4-elimination of the C-3 phosphate and the C-6 proR hydrogen from 5-enolpyruvylshikimate-3-phosphate (EPSP) to yield chorismate, which is the branch point compound that serves as the starting substrate for the three terminal pathways of aromatic amino acid biosynthesis. This reaction introduces a second double bond into the aromatic ring system. In Pyrobaculum aerophilum (strain ATCC 51768 / DSM 7523 / JCM 9630 / CIP 104966 / NBRC 100827 / IM2), this protein is Chorismate synthase.